The sequence spans 431 residues: Enolase (431 aa).

Glutamine 168 provides a ligand contact to (2R)-2-phosphoglycerate. Residue glutamate 210 is the Proton donor of the active site. Mg(2+)-binding residues include aspartate 247, glutamate 291, and aspartate 318. 4 residues coordinate (2R)-2-phosphoglycerate: lysine 343, arginine 372, serine 373, and lysine 394. Residue lysine 343 is the Proton acceptor of the active site.

This sequence belongs to the enolase family. Component of the RNA degradosome, a multiprotein complex involved in RNA processing and mRNA degradation. Mg(2+) serves as cofactor.

Its subcellular location is the cytoplasm. The protein localises to the secreted. It localises to the cell surface. It carries out the reaction (2R)-2-phosphoglycerate = phosphoenolpyruvate + H2O. The protein operates within carbohydrate degradation; glycolysis; pyruvate from D-glyceraldehyde 3-phosphate: step 4/5. Functionally, catalyzes the reversible conversion of 2-phosphoglycerate (2-PG) into phosphoenolpyruvate (PEP). It is essential for the degradation of carbohydrates via glycolysis. This Acinetobacter baylyi (strain ATCC 33305 / BD413 / ADP1) protein is Enolase.